The chain runs to 439 residues: Transmembrane protease serine 11F (439 aa).

Topologically, residues 1 to 33 are cytoplasmic; the sequence is MMYAPVEFSQTAYPRIEYQRRQQQFWDPIRLAL. Residues 34 to 54 form a helical; Signal-anchor for type II membrane protein membrane-spanning segment; that stretch reads FTLAIVAIVGITIGIVTHFVV. At 55–439 the chain is on the extracellular side; it reads EDDKSFYYLA…RDWIASKTGL (385 aa). The SEA domain occupies 58-176; it reads KSFYYLASFQ…PSFSLTPIDS (119 aa). The 232-residue stretch at 207–438 folds into the Peptidase S1 domain; sequence IVQGRETAME…YRDWIASKTG (232 aa). An intrachain disulfide couples cysteine 234 to cysteine 250. Active-site charge relay system residues include histidine 249 and aspartate 294. 2 disulfides stabilise this stretch: cysteine 359-cysteine 375 and cysteine 386-cysteine 414. Serine 390 serves as the catalytic Charge relay system.

The protein belongs to the peptidase S1 family.

Its subcellular location is the membrane. Functionally, probable serine protease. The chain is Transmembrane protease serine 11F (Tmprss11f) from Mus musculus (Mouse).